Reading from the N-terminus, the 157-residue chain is Type II restriction enzyme PvuII (157 aa).

Mg(2+) contacts are provided by Asp-58 and Glu-68.

In terms of assembly, homodimer. Requires Mg(2+) as cofactor.

It carries out the reaction Endonucleolytic cleavage of DNA to give specific double-stranded fragments with terminal 5'-phosphates.. A P subtype restriction enzyme that recognizes the double-stranded sequence 5'-CAGCTG-3' and cleaves after G-3. The polypeptide is Type II restriction enzyme PvuII (pvuIIR) (Proteus hauseri).